The sequence spans 344 residues: tRNA N6-adenosine threonylcarbamoyltransferase (344 aa).

Positions 112 and 116 each coordinate Fe cation. Substrate-binding positions include 134–138 (LASGG), Asp167, Gly180, and Asn280. A Fe cation-binding site is contributed by Asp308.

This sequence belongs to the KAE1 / TsaD family. The cofactor is Fe(2+).

Its subcellular location is the cytoplasm. It catalyses the reaction L-threonylcarbamoyladenylate + adenosine(37) in tRNA = N(6)-L-threonylcarbamoyladenosine(37) in tRNA + AMP + H(+). Its function is as follows. Required for the formation of a threonylcarbamoyl group on adenosine at position 37 (t(6)A37) in tRNAs that read codons beginning with adenine. Is involved in the transfer of the threonylcarbamoyl moiety of threonylcarbamoyl-AMP (TC-AMP) to the N6 group of A37, together with TsaE and TsaB. TsaD likely plays a direct catalytic role in this reaction. The protein is tRNA N6-adenosine threonylcarbamoyltransferase of Rickettsia rickettsii (strain Iowa).